We begin with the raw amino-acid sequence, 514 residues long: 2,3-bisphosphoglycerate-independent phosphoglycerate mutase (514 aa).

Positions 13 and 63 each coordinate Mn(2+). The active-site Phosphoserine intermediate is the serine 63. Substrate-binding positions include histidine 124, 154–155 (RD), arginine 186, arginine 192, 258–261 (RADR), and lysine 332. Mn(2+)-binding residues include aspartate 399, histidine 403, aspartate 440, histidine 441, and histidine 459.

The protein belongs to the BPG-independent phosphoglycerate mutase family. Monomer. It depends on Mn(2+) as a cofactor.

It carries out the reaction (2R)-2-phosphoglycerate = (2R)-3-phosphoglycerate. It participates in carbohydrate degradation; glycolysis; pyruvate from D-glyceraldehyde 3-phosphate: step 3/5. Functionally, catalyzes the interconversion of 2-phosphoglycerate and 3-phosphoglycerate. The polypeptide is 2,3-bisphosphoglycerate-independent phosphoglycerate mutase (Legionella pneumophila (strain Paris)).